Here is a 375-residue protein sequence, read N- to C-terminus: Protein SSUH2 homolog (375 aa).

As to expression, expressed in enterocytes of small and large intestinal mucosa (at protein level). Expressed in chromaffine and interstitial cells. Expressed in peripheral blood and gingival cells.

It is found in the cytoplasm. The protein resides in the nucleus. In terms of biological role, plays a role in odontogenesis. The sequence is that of Protein SSUH2 homolog from Homo sapiens (Human).